Reading from the N-terminus, the 852-residue chain is Tiger protein I3 (852 aa).

A signal peptide spans 1–18 (MKILLFFILFYLFSFSIS). The Extracellular portion of the chain corresponds to 19 to 830 (YDEVIPLGYE…DVHQYSDARN (812 aa)). N-linked (GlcNAc...) asparagine glycans are attached at residues Asn31, Asn47, Asn67, Asn97, Asn129, Asn201, Asn215, Asn228, Asn260, Asn323, Asn352, Asn356, Asn404, Asn441, Asn476, Asn483, Asn501, Asn512, Asn574, Asn592, Asn635, Asn658, Asn661, Asn679, Asn680, Asn723, Asn757, Asn761, Asn773, Asn785, and Asn800. The 78-residue stretch at 290–367 (IPSIVNSIPK…SSPIAVSIND (78 aa)) folds into the IPT/TIG domain. A helical transmembrane segment spans residues 831-851 (IFQNLLLSILIIIIISLFISN). Ile852 is a topological domain (cytoplasmic).

It localises to the membrane. The protein is Tiger protein I3 (tgrI3) of Dictyostelium discoideum (Social amoeba).